The following is a 155-amino-acid chain: Vasotocin-neurophysin VT 1 (155 aa).

The first 20 residues, 1–20 (MPDSTIPLLCVLGLLALSSA), serve as a signal peptide directing secretion. A disulfide bridge connects residues C21 and C26. Residue G29 is modified to Glycine amide. 7 disulfides stabilise this stretch: C41–C85, C44–C58, C52–C75, C59–C65, C92–C105, C99–C117, and C106–C111.

This sequence belongs to the vasopressin/oxytocin family. Post-translationally, seven disulfide bonds are present in neurophysin.

It localises to the secreted. Vasotocin is probably an antidiuretic hormone. This chain is Vasotocin-neurophysin VT 1, found in Oncorhynchus masou (Cherry salmon).